Consider the following 453-residue polypeptide: Ras association domain-containing protein 10 (453 aa).

The region spanning 1 to 107 (MENEEWKVSV…VKFVLVRSEA (107 aa)) is the Ras-associating domain. Residues 262–295 (QKCDEVLLLQEQISRQEEAMEQMTVQIQEELNKR) are a coiled coil. Residues 299–310 (RRQEELSSKEQE) show a composition bias toward basic and acidic residues. Disordered regions lie at residues 299 to 322 (RRQE…DQGG) and 402 to 453 (GVTT…ESLV). Polar residues-rich tracts occupy residues 402–411 (GVTTTGSPTD) and 433–444 (TGLSSMHSQDSD).

It localises to the cytoplasm. Its subcellular location is the cytosol. The protein localises to the cytoskeleton. The protein resides in the microtubule organizing center. It is found in the centrosome. It localises to the spindle pole. Its function is as follows. May play role in regulating embryonic neurogenesis. This chain is Ras association domain-containing protein 10 (rassf10), found in Xenopus laevis (African clawed frog).